A 592-amino-acid polypeptide reads, in one-letter code: MWWRHAPWVLIVVVDVMYCSSEEENAVSFELDPDNETIIFPFAFGGDNIIMLPTMKYSDYKRSTRYMKDPEFLLYSLSSVVWDLVVGHVSYKNDDRFDKLFDKMMSKYLNNVSINASRIYIRGNKTFSEMLEMVYERIFECDSKGSRQMARYGESLIREIDSKMESMPSEMSEEEKEKMRSDLNDDKKYVESFRDTEKWRQIVEAEKMVCNACKEICLGLKEEELMGLFAEGSMRKALKAKLGEEKASHRGYLECAFVDIKLLLDAHKEHGGDVTKELVMQMLLGKKGKNIDKRYINKVANVVKERQRRREREIEKNMKELMRDEEKAKSKEKAKSKEKAKSKKKGESVGVSEAKEEEKKESETEEVEASEEVGIPSVEVGGARRKTGKKSEGGRKRYKIHRRVSRWRKSPEKIKDEWDKGSEEKWKGRSLEEIKEQKVFHDIMGVLELLRSEDADKFFMDTGKYTKGGSERQRMVAIGVLESGGKRMAGVVEVGTFKDSSSGCPVVYHLMFRVTGIEGMGDVMSPEFAEANDIEKIDKNREYQDEGMFVYPKGVTFETVKETGSFQIVWENPSDTSEVLRRLTIQRRPCVI.

Basic and acidic residues-rich tracts occupy residues 306–339 and 353–362; these read RQRR…SKEK and EAKEEEKKES. The disordered stretch occupies residues 306 to 404; that stretch reads RQRRREREIE…RKRYKIHRRV (99 aa).

It belongs to the UPF0329 family.

The polypeptide is UPF0329 protein ECU01_0110/ECU01_1500/ECU08_0040 (Encephalitozoon cuniculi (strain GB-M1) (Microsporidian parasite)).